The primary structure comprises 270 residues: Orotidine 5'-phosphate decarboxylase (270 aa).

Catalysis depends on Lys-95, which acts as the Proton donor.

This sequence belongs to the OMP decarboxylase family. Type 2 subfamily.

It carries out the reaction orotidine 5'-phosphate + H(+) = UMP + CO2. It participates in pyrimidine metabolism; UMP biosynthesis via de novo pathway; UMP from orotate: step 2/2. In Dechloromonas aromatica (strain RCB), this protein is Orotidine 5'-phosphate decarboxylase.